We begin with the raw amino-acid sequence, 407 residues long: L-amino-acid oxidase (407 aa).

Cysteines 10 and 94 form a disulfide. Asn-93 carries N-linked (GlcNAc...) asparagine glycosylation. His-144 provides a ligand contact to substrate. Val-182 contributes to the FAD binding site. A disulfide bridge connects residues Cys-252 and Cys-333. N-linked (GlcNAc...) asparagine glycosylation occurs at Asn-282. Tyr-293 contacts substrate. FAD contacts are provided by residues Glu-378 and 385–390; that span reads GWIDST. Substrate is bound at residue 385-386; the sequence is GW.

Belongs to the flavin monoamine oxidase family. FIG1 subfamily. In terms of assembly, homodimer; non-covalently linked. Requires FAD as cofactor. As to expression, expressed by the venom gland.

The protein resides in the secreted. It carries out the reaction an L-alpha-amino acid + O2 + H2O = a 2-oxocarboxylate + H2O2 + NH4(+). The catalysed reaction is L-leucine + O2 + H2O = 4-methyl-2-oxopentanoate + H2O2 + NH4(+). It catalyses the reaction L-phenylalanine + O2 + H2O = 3-phenylpyruvate + H2O2 + NH4(+). The enzyme catalyses L-isoleucine + O2 + H2O = (S)-3-methyl-2-oxopentanoate + H2O2 + NH4(+). It carries out the reaction L-aspartate + O2 + H2O = oxaloacetate + H2O2 + NH4(+). The catalysed reaction is L-lysine + O2 + H2O = 6-amino-2-oxohexanoate + H2O2 + NH4(+). It catalyses the reaction L-glutamate + O2 + H2O = H2O2 + 2-oxoglutarate + NH4(+). Functionally, catalyzes an oxidative deamination of predominantly hydrophobic and aromatic L-amino acids, thus producing hydrogen peroxide that may contribute to the diverse toxic effects of this enzyme. Is highly active on L-Leu followed by L-Phe and L-Ile, moderately active on L-Asp, L-Glu, and L-Lys, and not active on L-Pro, L-Asn, L-Gly, L-Ser and L-Cys. Exhibits diverse biological activities such as antibacterial activity (Minimal inhibitory concentrations (MIC) are 9.0 ug/ml against S.aureus, 144.0 ug/ml against P.aeruginosa and 288.0 ug/ml against E.coli) and inhibition of ADP- and TMVA-induced platelet aggregation. Effects of snake L-amino oxidases on platelets are controversial, since they either induce aggregation or inhibit agonist-induced aggregation. These different effects are probably due to different experimental conditions. Unlike other snake venom L-amino acid oxidases, does not induce hemorrhage. This protein may also induce hemolysis, edema, apoptosis and have antiparasitic activities. The sequence is that of L-amino-acid oxidase from Daboia siamensis (Eastern Russel's viper).